The chain runs to 413 residues: uncharacterized protein (413 aa).

A helical membrane pass occupies residues 25-47; it reads IVNLSALLPLITSTTSTAGSIIT.

The protein resides in the host membrane. This is an uncharacterized protein from Acidianus sp. F28 (AFV-2).